A 202-amino-acid polypeptide reads, in one-letter code: MSVQLEVKERAIRPRSLRNQLRHEGKVPAIVYGYQIESTPIYFEEKDLSKILREHGANTVIKMTVDGKNINTLMSKAQLDTFTGQMLHVEFLSVNMKETTEVEAEVQLIGESAGVKAGGTLAQNLYTVLVAATPDKLPESIEVDITNLEIGDALTIADLPEHKDYEILTDPEEQLVAIVEAQTAPEEEEGTAAETTEPELAE.

The interval Gln182–Glu202 is disordered. A compositionally biased stretch (acidic residues) spans Pro185 to Glu202.

This sequence belongs to the bacterial ribosomal protein bL25 family. CTC subfamily. Part of the 50S ribosomal subunit; part of the 5S rRNA/L5/L18/L25 subcomplex. Contacts the 5S rRNA. Binds to the 5S rRNA independently of L5 and L18.

Its function is as follows. This is one of the proteins that binds to the 5S RNA in the ribosome where it forms part of the central protuberance. In Enterococcus faecalis (strain ATCC 700802 / V583), this protein is Large ribosomal subunit protein bL25.